Here is a 461-residue protein sequence, read N- to C-terminus: UDP-N-acetylmuramate--L-alanine ligase (461 aa).

Position 112–118 (112–118) interacts with ATP; that stretch reads GTHGKTT.

It belongs to the MurCDEF family.

It localises to the cytoplasm. It catalyses the reaction UDP-N-acetyl-alpha-D-muramate + L-alanine + ATP = UDP-N-acetyl-alpha-D-muramoyl-L-alanine + ADP + phosphate + H(+). It functions in the pathway cell wall biogenesis; peptidoglycan biosynthesis. Cell wall formation. This Hydrogenovibrio crunogenus (strain DSM 25203 / XCL-2) (Thiomicrospira crunogena) protein is UDP-N-acetylmuramate--L-alanine ligase.